We begin with the raw amino-acid sequence, 450 residues long: Putative MYST-like histone acetyltransferase 1 (450 aa).

In terms of domain architecture, Tudor-knot spans Leu63–Leu122. The 272-residue stretch at Thr174–Pro445 folds into the MYST-type HAT domain. Residues Leu207 to Leu232 form a C2HC MYST-type zinc finger. Lys274 is subject to N6-acetyllysine; by autocatalysis. Residues Ile317–Thr319 and Gln324–Lys330 contribute to the acetyl-CoA site. Glu350 functions as the Proton donor/acceptor in the catalytic mechanism. Ser354 is an acetyl-CoA binding site.

It belongs to the MYST (SAS/MOZ) family. Post-translationally, autoacetylation at Lys-274 is required for proper function.

It is found in the nucleus. The catalysed reaction is L-lysyl-[protein] + acetyl-CoA = N(6)-acetyl-L-lysyl-[protein] + CoA + H(+). Functionally, histone acetyltransferase which may be involved in transcriptional activation. The chain is Putative MYST-like histone acetyltransferase 1 from Oryza sativa subsp. japonica (Rice).